The chain runs to 484 residues: Probable protein disulfide-isomerase ER-60 (484 aa).

An N-terminal signal peptide occupies residues 1-14 (MRWLLSCLFLVAFA). Thioredoxin domains lie at 15 to 125 (SCSK…SRAG) and 338 to 467 (FEDG…REAT). Active-site nucleophile residues include C46, C49, C388, and C391. Cystine bridges form between C46-C49 and C388-C391. Positions 481–484 (KSEL) match the Prevents secretion from ER motif.

This sequence belongs to the protein disulfide isomerase family.

It is found in the endoplasmic reticulum lumen. It catalyses the reaction Catalyzes the rearrangement of -S-S- bonds in proteins.. This chain is Probable protein disulfide-isomerase ER-60, found in Schistosoma mansoni (Blood fluke).